The following is a 383-amino-acid chain: tRNA (guanine-N(7)-)-methyltransferase non-catalytic subunit wuho (383 aa).

WD repeat units lie at residues 61–101 (NLEV…ALLL), 105–144 (ALAR…APPK), 148–187 (GHLS…DIHS), 191–231 (GHKE…EVLQ), and 289–329 (AGSW…QAES).

This sequence belongs to the WD repeat TRM82 family. As to quaternary structure, forms a heterodimer with the catalytic subunit Mettl1. Interacts with mei-P26 and weakly interacts with bgcn; required for the function or formation of the mei-P26-bgcn-bam-sxl complex. Interacts with nanos; may be involved in mei-P26-dependent derepression of the BMP signaling pathway. Interacts with Myc; the interaction may be mediated by mei-P26 and may be involved in the regulation of ribosome biogenesis. In testis, it is present at high level in hub cells, a niche for germline stem cells of testis. Ubiquitously expressed in all testicular cells throughout spermatogenesis. Ubiquitously expressed in all germline and somatic cells of the ovary.

It localises to the nucleus. Its subcellular location is the cytoplasm. The protein operates within tRNA modification; N(7)-methylguanine-tRNA biosynthesis. Its function is as follows. Required for the Mettl1-dependent formation of N(7)-methylguanine at position 46 (m7G46) in tRNA. In the Mettl1-wuho methyltransferase complex, it is required to stabilize and induce conformational changes of the catalytic subunit. Required for binding of nanos mRNA and repression of translation by the mei-P26-bgcn-bam-sxl complex. May cooperate with mei-P26 and nanos to derepress the BMP signaling pathway. May cooperate with mei-P26 to suppress expression of a subset of microRNAs. May cooperate with mei-P26 to regulate bam expression levels in germline cells during gametogenesis. Required to promote mitosis to meiosis transition during gametogenesis. May regulate germline cell division in part by regulating ribosome biogenesis. The sequence is that of tRNA (guanine-N(7)-)-methyltransferase non-catalytic subunit wuho from Drosophila mojavensis (Fruit fly).